Consider the following 173-residue polypeptide: Alpha-crystallin A chain (173 aa).

Position 1 is an N-acetylmethionine (methionine 1). The sHSP domain occupies 53 to 164 (NFLDSSNSGM…GDRSIPVTRD (112 aa)). Positions 101, 103, and 108 each coordinate Zn(2+). A disulfide bridge links cysteine 132 with cysteine 143. A disordered region spans residues 143 to 173 (CGPKSGGSESGRGDRSIPVTRDDKTNSTPSS). Residues 153–167 (GRGDRSIPVTRDDKT) show a composition bias toward basic and acidic residues.

It belongs to the small heat shock protein (HSP20) family. In terms of assembly, heteropolymer composed of three CRYAA and one CRYAB subunits. Inter-subunit bridging via zinc ions enhances stability, which is crucial as there is no protein turn over in the lens. Zinc coordination is achieved at least by His-101, Glu-103 and His-108. His-101 and Glu-103 come from the same molecule within the oligomer, while His-108 residue is provided by another molecule. Can also form homodimers and homotetramers (dimers of dimers) which serve as the building blocks of homooligomers. Part of a complex required for lens intermediate filament formation composed of BFSP1, BFSP2 and CRYAA.

Its subcellular location is the cytoplasm. The protein resides in the nucleus. Its function is as follows. Contributes to the transparency and refractive index of the lens. May act as a chaperone, preventing aggregation of various proteins under a wide range of stress conditions. The chain is Alpha-crystallin A chain (cryaa) from Psalidodon fasciatus (Banded astyanax).